We begin with the raw amino-acid sequence, 66 residues long: Large ribosomal subunit protein uL29c (66 aa).

This sequence belongs to the universal ribosomal protein uL29 family.

Its subcellular location is the plastid. It is found in the chloroplast. The sequence is that of Large ribosomal subunit protein uL29c from Gracilaria tenuistipitata var. liui (Red alga).